The primary structure comprises 187 residues: UPF0301 protein CKO_04323 (187 aa).

Belongs to the UPF0301 (AlgH) family.

This is UPF0301 protein CKO_04323 from Citrobacter koseri (strain ATCC BAA-895 / CDC 4225-83 / SGSC4696).